Reading from the N-terminus, the 416-residue chain is Basic salivary proline-rich protein 2 (416 aa).

Positions 1–16 (MLLILLSVALLALSSA) are cleaved as a signal peptide. Position 17 is a pyrrolidone carboxylic acid (Q17). The segment covering 19–28 (LNEDVSQEES) has biased composition (polar residues). The tract at residues 19-416 (LNEDVSQEES…QGGRPSRPPQ (398 aa)) is disordered. A Phosphoserine modification is found at S24. Positions 34–47 (GNPQGAPPQGGNKP) are enriched in low complexity. Composition is skewed to pro residues over residues 48-104 (QGPP…PPPQ) and 112-165 (RSPP…PPPQ). S52 is modified (phosphoserine). 15 repeat units span residues 53–72 (PPGK…QGPP), 74–93 (PPGK…QGPP), 94–113 (PPGK…SPRS), 114–133 (PPGK…QGPP), 135–154 (PPGK…QGPP), 155–174 (PPGK…RSSR), 176–195 (PPGK…QGPP), 197–216 (PPGK…QGPP), 217–236 (PPGK…QSAR), 238–257 (PPGK…QGPP), 259–278 (PPGK…QGPP), 279–298 (PPGK…RSSR), 300–319 (PPGK…QGPP), 321–340 (PPGK…QGPP), and 341–360 (PPGK…RSAR). The interval 53-360 (PPGKPQGPPP…QGGSKSRSAR (308 aa)) is 15 X 20 AA approximate tandem repeats of P-P-G-K-P-Q-G-P-P-P-Q-G-[GD]-[NKS]-[KSQ]-[PRS]-[QRS] [GPS]-[PSAR]-[PSR]. N-linked (GlcNAc...) asparagine glycosylation is present at N168. Pro residues predominate over residues 177–227 (PGKPQGPPPQGGNQPQGPPPPPGKPQGPPPQGGNKPQGPPPPGKPQGPPPQ). N230 carries N-linked (GlcNAc...) asparagine glycosylation. S232 carries an O-linked (Hex) serine glycan. The segment covering 239–289 (PGKPQGPPPQGGNQPQGPPPPPGKPQGPPPQGGNKPQGPPPPGKPQGPPPQ) has biased composition (pro residues). N-linked (GlcNAc...) asparagine glycosylation is present at N272. Residues 290–300 (GGSKSRSSRSP) show a composition bias toward low complexity. Pro residues-rich tracts occupy residues 301–351 (PGKP…PPPQ) and 378–416 (QGPP…RPPQ).

Post-translationally, N- and O-glycosylated. In head and neck cancer patients, O-glycosylated with glucosylgalactosyl carbohydrate moiety. This modification would require prior hydroxylation on the lysine residue. In terms of processing, proteolytically cleaved at the tripeptide Xaa-Pro-Gln, where Xaa in the P(3) position is mostly lysine. The endoprotease may be of microbial origin. Pyroglutamate formation occurs on terminal Gln residues of cleaved peptides. Pyroglutamate formation found on at least Gln-398 and Gln-400.

It is found in the secreted. This Homo sapiens (Human) protein is Basic salivary proline-rich protein 2 (PRB2).